Here is a 1244-residue protein sequence, read N- to C-terminus: DNA polymerase beta (1244 aa).

13 consecutive repeat copies span residues 1069–1072, 1073–1076, 1077–1080, 1081–1084, 1085–1088, 1089–1092, 1093–1096, 1097–1100, 1101–1104, 1105–1108, 1109–1112, 1113–1116, and 1117–1120. The tract at residues 1069-1118 is disordered; that stretch reads AGNPAGNPAGNPAGNPAGNPAGNPAGNPAGNPAGNPAGNPAGNPAGNPAG. Residues 1069-1120 are 13 X 4 AA tandem repeats of A-G-N-P; that stretch reads AGNPAGNPAGNPAGNPAGNPAGNPAGNPAGNPAGNPAGNPAGNPAGNPAGNP.

This sequence belongs to the DNA polymerase type-B family.

It catalyses the reaction DNA(n) + a 2'-deoxyribonucleoside 5'-triphosphate = DNA(n+1) + diphosphate. DNA-directed DNA polymerase involved in viral DNA replication. The sequence is that of DNA polymerase beta (DPOL) from African swine fever virus (isolate Pig/Portugal/Lis 60/1960) (ASFV).